A 23-amino-acid chain; its full sequence is Protein DCL, chloroplastic (23 aa).

It is found in the plastid. It localises to the chloroplast. Its function is as follows. Has a function in the early stage of chloroplast development and palisade cell morphogenesis. The protein is Protein DCL, chloroplastic of Pseudotsuga menziesii (Douglas-fir).